Consider the following 350-residue polypeptide: Legumin K (350 aa).

Disordered regions lie at residues 37-86 (LGGN…GNSV) and 102-170 (EEDT…RKNG). 3 stretches are compositionally biased toward basic and acidic residues: residues 104–118 (DTAKRLRSPRDERSQ), 141–150 (EQSHSHSHRE), and 160–170 (EKQRSEERKNG). A Cupin type-1 domain is found at 182–329 (ENIADAAGAD…AFGLRQRQVT (148 aa)).

Belongs to the 11S seed storage protein (globulins) family. As to quaternary structure, hexamer; each subunit is composed of an acidic and a basic chain derived from a single precursor and linked by a disulfide bond.

In terms of biological role, this protein found in the seeds of many leguminous and non-leguminous plants is the source of sulfur-containing amino acids in seed meals. The sequence is that of Legumin K (LEGK) from Pisum sativum (Garden pea).